The following is a 217-amino-acid chain: UPF0319 protein HS_1349 (217 aa).

The first 21 residues, 1 to 21 (MKFSFAALASAMLLTSTAAFA), serve as a signal peptide directing secretion.

The protein belongs to the UPF0319 family.

This chain is UPF0319 protein HS_1349, found in Histophilus somni (strain 129Pt) (Haemophilus somnus).